The primary structure comprises 378 residues: Tetraacyldisaccharide 4'-kinase (378 aa).

63–70 (AVGGAGKT) serves as a coordination point for ATP.

Belongs to the LpxK family.

The catalysed reaction is a lipid A disaccharide + ATP = a lipid IVA + ADP + H(+). The protein operates within glycolipid biosynthesis; lipid IV(A) biosynthesis; lipid IV(A) from (3R)-3-hydroxytetradecanoyl-[acyl-carrier-protein] and UDP-N-acetyl-alpha-D-glucosamine: step 6/6. In terms of biological role, transfers the gamma-phosphate of ATP to the 4'-position of a tetraacyldisaccharide 1-phosphate intermediate (termed DS-1-P) to form tetraacyldisaccharide 1,4'-bis-phosphate (lipid IVA). The chain is Tetraacyldisaccharide 4'-kinase from Anaeromyxobacter dehalogenans (strain 2CP-C).